Reading from the N-terminus, the 291-residue chain is Quinol oxidase subunit 2 (291 aa).

The N-terminal stretch at 1–28 (MQLKKAFWKLASLLPXSLLLFLGGCDKK) is a signal peptide. The next 2 helical transmembrane spans lie at 49-69 (SFLL…VILI) and 91-111 (LEII…IPTV).

Belongs to the cytochrome c oxidase subunit 2 family.

The protein localises to the cell membrane. It catalyses the reaction 2 a quinol + O2 = 2 a quinone + 2 H2O. Its function is as follows. Catalyzes quinol oxidation with the concomitant reduction of oxygen to water. Subunit II transfers the electrons from a quinol to the binuclear center of the catalytic subunit I. The sequence is that of Quinol oxidase subunit 2 from Bacillus cereus (strain ATCC 10987 / NRS 248).